The following is a 644-amino-acid chain: 3D-(3,5/4)-trihydroxycyclohexane-1,2-dione hydrolase (644 aa).

E65 contacts thiamine diphosphate. The segment at 442-522 (SLPGDLHKVW…INILLFDNAG (81 aa)) is thiamine pyrophosphate binding. D493 and N520 together coordinate Mg(2+).

The protein belongs to the TPP enzyme family. Mg(2+) serves as cofactor. The cofactor is thiamine diphosphate.

The enzyme catalyses 3D-3,5/4-trihydroxycyclohexane-1,2-dione + H2O = 5-deoxy-D-glucuronate + H(+). It participates in polyol metabolism; myo-inositol degradation into acetyl-CoA; acetyl-CoA from myo-inositol: step 3/7. Involved in the cleavage of the C1-C2 bond of 3D-(3,5/4)-trihydroxycyclohexane-1,2-dione (THcHDO) to yield 5-deoxy-glucuronate (5DG). The protein is 3D-(3,5/4)-trihydroxycyclohexane-1,2-dione hydrolase of Clostridium tetani (strain Massachusetts / E88).